A 127-amino-acid polypeptide reads, in one-letter code: Glycine cleavage system H protein (127 aa).

The Lipoyl-binding domain occupies 24-106 (VVTVGVTFHA…YGAGWFFKLK (83 aa)). N6-lipoyllysine is present on Lys65.

The protein belongs to the GcvH family. As to quaternary structure, the glycine cleavage system is composed of four proteins: P, T, L and H. Requires (R)-lipoate as cofactor.

The glycine cleavage system catalyzes the degradation of glycine. The H protein shuttles the methylamine group of glycine from the P protein to the T protein. The sequence is that of Glycine cleavage system H protein from Laribacter hongkongensis (strain HLHK9).